The chain runs to 455 residues: D-inositol 3-phosphate glycosyltransferase (455 aa).

Residues 1–25 are disordered; the sequence is MSQHVSRLGGLRGRSHGHGAFGGPY. His45 contributes to the 1D-myo-inositol 3-phosphate binding site. UDP-N-acetyl-alpha-D-glucosamine contacts are provided by residues 51–52 and Gly59; that span reads QP. 1D-myo-inositol 3-phosphate contacts are provided by residues 56–61, Lys114, Tyr147, Thr171, and Arg191; that span reads DAGGMN. Arg266 and Lys271 together coordinate UDP-N-acetyl-alpha-D-glucosamine. Mg(2+) contacts are provided by Tyr341, Arg342, and Ala344. Residues Glu354 and Glu362 each contribute to the UDP-N-acetyl-alpha-D-glucosamine site. Thr368 provides a ligand contact to Mg(2+).

Belongs to the glycosyltransferase group 1 family. MshA subfamily. As to quaternary structure, homodimer.

It catalyses the reaction 1D-myo-inositol 3-phosphate + UDP-N-acetyl-alpha-D-glucosamine = 1D-myo-inositol 2-acetamido-2-deoxy-alpha-D-glucopyranoside 3-phosphate + UDP + H(+). In terms of biological role, catalyzes the transfer of a N-acetyl-glucosamine moiety to 1D-myo-inositol 3-phosphate to produce 1D-myo-inositol 2-acetamido-2-deoxy-glucopyranoside 3-phosphate in the mycothiol biosynthesis pathway. The chain is D-inositol 3-phosphate glycosyltransferase from Streptomyces bingchenggensis (strain BCW-1).